The chain runs to 1396 residues: MSDASISGSEPELDPEDMEEEEEDDEDDDEEEEEEEDEEDNDGDDEDDKQDINEKSQNAALGEDSPEQGEEGWKRSTTSGQSGQESDEAKKKRLQKPANLRRNIRKLLREDQLESVTKTAQQEELERRKRLEQQRKDYPLPLTLPPVSLDFLQEEIELRAADVSQLVKSQEIICLDSSSGESDDEGKVKSHSIKDEIIELSSGEEDNLQISDNADSTNEVDGDITTENSGSHVNDALNQADHLGRVLVNINHPPNEKDIFLAPQLARAVKSHQIGGIRFLYDNLVESLERFSGSSGFGCILAHSMGLGKTLQVISFLDVLFQHTSAKTVLAIVPVNTLQNWLAEFNMWLPPPESLPKDHNQELVQPRAFKVHTMNDEHKTTAARAKVVNDWATDGGVLLMGYEMYRLLSLKKSFTAGRKKKSKKAAGPVIIDLDEEDRQQEMLKGIEKALSRPGPDVVICDEGHRIKNCHASTSQALKNIRSRRRVVLTGYPLQNNLIEYWCMVDFVRPDFLGTRQEFSNMFERPILNGQCVDSTPQDKRLMRYRSHVLHSLLEGFVQRRGHTVLKAQLPFKEEHVILVRLSKIQRDLYTEFMNRFRDAGNSGWLGLNPLKAFCVCCKIWNHPDVLYEALQKENLANEQDLDVEDLGTNNRCNAQSGKIKVEPNSLGALMGETAHTKQLQGIVLNPSHEKANQVVTYEWAKEILSDYIPGQLQNSPKMVLLFHLIEESMRMGDKILVFSQSLSTLSIMEEFLAKRKMPIPAGSDGQEGHTWIRNVNYYRLDGSTSASERERLINQFNDPSNEKVWLFLLSTRAGCLGVNLIGANRVVVFDASWNPCHDAQAVCRVYRYGQRKPCYIYRLVSDFTLEKKIYDRQITKQGMSDRVVDDLNPEVNFTRREVENLLHFVEEEPDASRQHLDSSSFHEAVLQKACLQYPHLITKEPFQHESLLLDRKEQKLTLAEKKAAKRGYEEEKRASVPYTRPSYTQYYPAPDHNLGNIPAFSQRHWRPLMKGDDRPVASVRPLQSTPIPMLPRHVSVNHPGSASASVHPYNFPVNYLQRAGVLVQKVVTTTDIVIPGMTTSTDVQARISAGESIHVIRGTKGTYIRTSDGRIFAIRASGKQKSGEVRRQATSGAQGSSAPYLSNGRHSTSSPSQQDSEDPPRPLSPDSPEILNELQKYADAAAARGSHTAPQLQNLGLHHQGINPAPKLQPRKRKDPQDQSSHWPSNKRNPYSQLSYPNTGGFGVTPSTMNHNLVRSSNPVFMGPGGGSSHFQLPSLLSDPQTGLPLVQDSLLTHSSGTSSAPSVPPHYLLPRGFPLPFSQSLLPQTRMFAPYPSQILNRGLPTNNPASTFPGYLSSHSNYQASPGTSSRPLPSGETELGSCEEDGRDDDVVEVTGE.

The interval 1–103 is disordered; the sequence is MSDASISGSE…LQKPANLRRN (103 aa). Residues 11-49 show a composition bias toward acidic residues; the sequence is PELDPEDMEEEEEDDEDDDEEEEEEEDEEDNDGDDEDDK. Over residues 75–84 the composition is skewed to polar residues; the sequence is RSTTSGQSGQ. Residues 290–510 enclose the Helicase ATP-binding domain; the sequence is RFSGSSGFGC…WCMVDFVRPD (221 aa). 303–310 provides a ligand contact to ATP; sequence HSMGLGKT. A DEAH box motif is present at residues 461–464; the sequence is DEGH. The LXXLL motif 1 motif lies at 549-553; the sequence is LHSLL. A Helicase C-terminal domain is found at 717–891; sequence KMVLLFHLIE…RVVDDLNPEV (175 aa). Disordered stretches follow at residues 1117 to 1168 and 1194 to 1250; these read SGKQ…PDSP and NLGL…STMN. 2 stretches are compositionally biased toward polar residues: residues 1128 to 1148 and 1218 to 1238; these read QATS…RHST and DQSS…SYPN. Positions 1273 to 1277 match the LXXLL motif 2 motif; it reads LPSLL. The segment at 1340–1396 is disordered; sequence GLPTNNPASTFPGYLSSHSNYQASPGTSSRPLPSGETELGSCEEDGRDDDVVEVTGE. Residues 1355–1370 show a composition bias toward polar residues; it reads SSHSNYQASPGTSSRP. The segment covering 1380–1396 has biased composition (acidic residues); the sequence is SCEEDGRDDDVVEVTGE.

This sequence belongs to the SNF2/RAD54 helicase family.

Its subcellular location is the nucleus. It carries out the reaction ATP + H2O = ADP + phosphate + H(+). Functionally, DNA helicase that modulates androgen receptor (AR)-dependent transactivation in a promoter-dependent manner. The chain is Helicase ARIP4 (rad54l2) from Xenopus tropicalis (Western clawed frog).